The primary structure comprises 952 residues: UvrABC system protein A (952 aa).

Residue 38-45 participates in ATP binding; it reads GLSGSGKS. The segment at 259 to 286 adopts a C4-type zinc-finger fold; sequence CDKCGFSISELEPRLFSFNSPLGSCSYC. ABC transporter domains follow at residues 316–595 and 615–944; these read FKNI…SNSI and GNGK…QYLS. 647-654 is a binding site for ATP; it reads GVSGSGKS. The C4-type zinc finger occupies 746–772; sequence CDKCFGDGVIRIEMHFLPDVYVKCEVC.

The protein belongs to the ABC transporter superfamily. UvrA family. As to quaternary structure, forms a heterotetramer with UvrB during the search for lesions.

Its subcellular location is the cytoplasm. In terms of biological role, the UvrABC repair system catalyzes the recognition and processing of DNA lesions. UvrA is an ATPase and a DNA-binding protein. A damage recognition complex composed of 2 UvrA and 2 UvrB subunits scans DNA for abnormalities. When the presence of a lesion has been verified by UvrB, the UvrA molecules dissociate. This is UvrABC system protein A from Mycoplasma genitalium (strain ATCC 33530 / DSM 19775 / NCTC 10195 / G37) (Mycoplasmoides genitalium).